The sequence spans 692 residues: Elongation factor G (692 aa).

Positions 8 to 282 (ENTRNIGIMA…AVIDYLPSPL (275 aa)) constitute a tr-type G domain. GTP is bound by residues 17 to 24 (AHIDAGKT), 81 to 85 (DTPGH), and 135 to 138 (NKMD).

Belongs to the TRAFAC class translation factor GTPase superfamily. Classic translation factor GTPase family. EF-G/EF-2 subfamily.

The protein resides in the cytoplasm. Its function is as follows. Catalyzes the GTP-dependent ribosomal translocation step during translation elongation. During this step, the ribosome changes from the pre-translocational (PRE) to the post-translocational (POST) state as the newly formed A-site-bound peptidyl-tRNA and P-site-bound deacylated tRNA move to the P and E sites, respectively. Catalyzes the coordinated movement of the two tRNA molecules, the mRNA and conformational changes in the ribosome. The sequence is that of Elongation factor G from Bacillus cereus (strain AH820).